We begin with the raw amino-acid sequence, 372 residues long: Putative neuropeptide precursor protein (372 aa).

A signal peptide spans 1–17; it reads MLLFSLTAITAVLAVSA. Disordered stretches follow at residues 18 to 89 and 136 to 208; these read VPTP…SNGE and VTKS…KRDS. The span at 19 to 31 shows a compositional bias: polar residues; sequence PTPSNNKDGSTIS. Over residues 38 to 57 the composition is skewed to basic and acidic residues; that stretch reads DQTKDDNRSLFLNKSDKNDL. Residues 72–89 are compositionally biased toward polar residues; the sequence is GYDQTVDQRFDSPQSNGE. Positions 177–191 are enriched in low complexity; that stretch reads GGAAASAKTATKNSG.

In terms of processing, may be proteolytically processed to give rise to a number of active peptides. Detected in the brain and frontal ganglion and in the axons connecting to the corpus cardiacum and corpus allatum (at protein level). Detected in the brain-subesophageal ganglion (brain-SG) complex, fat body, midgut and ovary. Expression in the brain-SG complex is 2-3 times higher than in the other tissues.

Its subcellular location is the cytoplasm. It localises to the secreted. The polypeptide is Putative neuropeptide precursor protein (Bombyx mori (Silk moth)).